A 232-amino-acid polypeptide reads, in one-letter code: Acetate--CoA ligase [ADP-forming] I subunit beta (232 aa).

The ATP-grasp domain occupies 27-63; sequence KEILKLYGIPVPEFKVARNEEEAVKFSGEIGYPVVMK. 53–64 lines the ATP pocket; it reads SGEIGYPVVMKI.

This sequence belongs to the acetate CoA ligase beta subunit family. In terms of assembly, heterotetramer of two alpha and two beta subunits.

The protein localises to the cytoplasm. The enzyme catalyses acetate + ATP + CoA = acetyl-CoA + ADP + phosphate. Its activity is regulated as follows. Activity is dependent on magnesium. In terms of biological role, catalyzes the reversible formation of acetate and ATP from acetyl-CoA by using ADP and phosphate. Can use other substrates such as isobutyryl-CoA, propionyl-CoA and butyryl-CoA, but not indoleacetyl-CoA, phenylacetyl-CoA or succinyl-CoA. Seems to be involved primarily in the conversion of acetyl-CoA to acetate. Participates in the degradation of branched-chain amino acids via branched-chain-acyl-CoA esters. The chain is Acetate--CoA ligase [ADP-forming] I subunit beta from Pyrococcus furiosus (strain ATCC 43587 / DSM 3638 / JCM 8422 / Vc1).